Reading from the N-terminus, the 386-residue chain is Succinate--CoA ligase [ADP-forming] subunit beta (386 aa).

The ATP-grasp domain occupies 9–244 (KAVLRSYGVS…LDEEDSKEIE (236 aa)). Residues K46, 53 to 55 (GRG), E99, C102, and E107 each bind ATP. Mg(2+) contacts are provided by N199 and D213. Substrate-binding positions include N264 and 321-323 (GIM).

Belongs to the succinate/malate CoA ligase beta subunit family. Heterotetramer of two alpha and two beta subunits. Mg(2+) serves as cofactor.

It carries out the reaction succinate + ATP + CoA = succinyl-CoA + ADP + phosphate. It catalyses the reaction GTP + succinate + CoA = succinyl-CoA + GDP + phosphate. It participates in carbohydrate metabolism; tricarboxylic acid cycle; succinate from succinyl-CoA (ligase route): step 1/1. Succinyl-CoA synthetase functions in the citric acid cycle (TCA), coupling the hydrolysis of succinyl-CoA to the synthesis of either ATP or GTP and thus represents the only step of substrate-level phosphorylation in the TCA. The beta subunit provides nucleotide specificity of the enzyme and binds the substrate succinate, while the binding sites for coenzyme A and phosphate are found in the alpha subunit. This Bacillus cereus (strain ATCC 14579 / DSM 31 / CCUG 7414 / JCM 2152 / NBRC 15305 / NCIMB 9373 / NCTC 2599 / NRRL B-3711) protein is Succinate--CoA ligase [ADP-forming] subunit beta.